Reading from the N-terminus, the 366-residue chain is Carbamoyl phosphate synthase small chain (366 aa).

The tract at residues 1-172 (MYGILVLEDG…TYNAENEKTS (172 aa)) is CPSase. The L-glutamine site is built by Ser45, Gly220, and Gly222. A Glutamine amidotransferase type-1 domain is found at 172 to 363 (SCVLIDCGVK…VELGIKFKAE (192 aa)). Residue Cys247 is the Nucleophile of the active site. Positions 248, 251, 289, 291, and 292 each coordinate L-glutamine. Residues His336 and Glu338 contribute to the active site.

Belongs to the CarA family. In terms of assembly, composed of two chains; the small (or glutamine) chain promotes the hydrolysis of glutamine to ammonia, which is used by the large (or ammonia) chain to synthesize carbamoyl phosphate. Tetramer of heterodimers (alpha,beta)4.

It catalyses the reaction hydrogencarbonate + L-glutamine + 2 ATP + H2O = carbamoyl phosphate + L-glutamate + 2 ADP + phosphate + 2 H(+). The enzyme catalyses L-glutamine + H2O = L-glutamate + NH4(+). It participates in amino-acid biosynthesis; L-arginine biosynthesis; carbamoyl phosphate from bicarbonate: step 1/1. The protein operates within pyrimidine metabolism; UMP biosynthesis via de novo pathway; (S)-dihydroorotate from bicarbonate: step 1/3. Functionally, small subunit of the glutamine-dependent carbamoyl phosphate synthetase (CPSase). CPSase catalyzes the formation of carbamoyl phosphate from the ammonia moiety of glutamine, carbonate, and phosphate donated by ATP, constituting the first step of 2 biosynthetic pathways, one leading to arginine and/or urea and the other to pyrimidine nucleotides. The small subunit (glutamine amidotransferase) binds and cleaves glutamine to supply the large subunit with the substrate ammonia. The chain is Carbamoyl phosphate synthase small chain from Methanococcus maripaludis (strain C7 / ATCC BAA-1331).